The primary structure comprises 154 residues: Interleukin-2 (154 aa).

The first 20 residues, 1–20 (MYKIQLLSCIALTLILVTNS), serve as a signal peptide directing secretion. A disulfide bond links Cys78 and Cys126. Residue Asn111 is glycosylated (N-linked (GlcNAc...) asparagine).

Belongs to the IL-2 family.

It localises to the secreted. Cytokine produced by activated CD4-positive helper T-cells and to a lesser extend activated CD8-positive T-cells and natural killer (NK) cells that plays pivotal roles in the immune response and tolerance. Binds to a receptor complex composed of either the high-affinity trimeric IL-2R (IL2RA/CD25, IL2RB/CD122 and IL2RG/CD132) or the low-affinity dimeric IL-2R (IL2RB and IL2RG). Interaction with the receptor leads to oligomerization and conformation changes in the IL-2R subunits resulting in downstream signaling starting with phosphorylation of JAK1 and JAK3. In turn, JAK1 and JAK3 phosphorylate the receptor to form a docking site leading to the phosphorylation of several substrates including STAT5. This process leads to activation of several pathways including STAT, phosphoinositide-3-kinase/PI3K and mitogen-activated protein kinase/MAPK pathways. Functions as a T-cell growth factor and can increase NK-cell cytolytic activity as well. Promotes strong proliferation of activated B-cells and subsequently immunoglobulin production. Plays a pivotal role in regulating the adaptive immune system by controlling the survival and proliferation of regulatory T-cells, which are required for the maintenance of immune tolerance. Moreover, participates in the differentiation and homeostasis of effector T-cell subsets, including Th1, Th2, Th17 as well as memory CD8-positive T-cells. In Felis catus (Cat), this protein is Interleukin-2 (IL2).